The chain runs to 134 residues: Large ribosomal subunit protein uL16c (134 aa).

Residues 1–17 (MLSPKRTRFRKQHRGRM) are compositionally biased toward basic residues. The tract at residues 1–22 (MLSPKRTRFRKQHRGRMKGISS) is disordered.

It belongs to the universal ribosomal protein uL16 family. As to quaternary structure, part of the 50S ribosomal subunit.

It is found in the plastid. Its subcellular location is the chloroplast. The sequence is that of Large ribosomal subunit protein uL16c from Solanum tuberosum (Potato).